Reading from the N-terminus, the 929-residue chain is Leucine--tRNA ligase (929 aa).

Residues Pro-42–His-52 carry the 'HIGH' region motif. Positions Lys-614–Ser-618 match the 'KMSKS' region motif. ATP is bound at residue Lys-617.

The protein belongs to the class-I aminoacyl-tRNA synthetase family.

Its subcellular location is the cytoplasm. The enzyme catalyses tRNA(Leu) + L-leucine + ATP = L-leucyl-tRNA(Leu) + AMP + diphosphate. The protein is Leucine--tRNA ligase of Trichodesmium erythraeum (strain IMS101).